The primary structure comprises 362 residues: Malate dehydrogenase (362 aa).

Belongs to the LDH2/MDH2 oxidoreductase family. As to quaternary structure, homodimer.

It localises to the cytoplasm. The catalysed reaction is (S)-malate + NAD(+) = oxaloacetate + NADH + H(+). This is Malate dehydrogenase (mdh) from Pyrococcus abyssi (strain GE5 / Orsay).